Here is a 171-residue protein sequence, read N- to C-terminus: Deoxyuridine 5'-triphosphate nucleotidohydrolase (171 aa).

Glu143 provides a ligand contact to Mg(2+).

Belongs to the dUTPase family. Homotrimer. Mg(2+) is required as a cofactor.

It catalyses the reaction dUTP + H2O = dUMP + diphosphate + H(+). It functions in the pathway pyrimidine metabolism; dUMP biosynthesis; dUMP from dCTP (dUTP route): step 2/2. Its function is as follows. This enzyme is involved in nucleotide metabolism: it produces dUMP, the immediate precursor of thymidine nucleotides and it decreases the intracellular concentration of dUTP, preventing uracil incorporation into DNA. This chain is Deoxyuridine 5'-triphosphate nucleotidohydrolase (DUT), found in Oryza sativa subsp. japonica (Rice).